We begin with the raw amino-acid sequence, 123 residues long: Large ribosomal subunit protein uL14 (123 aa).

This sequence belongs to the universal ribosomal protein uL14 family. As to quaternary structure, part of the 50S ribosomal subunit. Forms a cluster with proteins L3 and L19. In the 70S ribosome, L14 and L19 interact and together make contacts with the 16S rRNA in bridges B5 and B8.

In terms of biological role, binds to 23S rRNA. Forms part of two intersubunit bridges in the 70S ribosome. The sequence is that of Large ribosomal subunit protein uL14 from Hamiltonella defensa subsp. Acyrthosiphon pisum (strain 5AT).